Here is a 199-residue protein sequence, read N- to C-terminus: Securin (199 aa).

2 disordered regions span residues 1 to 23 (MATL…SKDG) and 58 to 108 (RKAL…DDAY). N-acetylalanine is present on Ala-2. Residues 7-23 (VDKDNEEPGSRLASKDG) show a composition bias toward basic and acidic residues. Positions 58 to 61 (RKAL) match the D-box motif. Residues 68 to 70 (TEK) carry the TEK-box 1 motif. A compositionally biased stretch (polar residues) spans 76–85 (KPLQSKQPTL). The short motif at 91 to 93 (TEK) is the TEK-box 2 element. Ser-162 carries the post-translational modification Phosphoserine. The SH3-binding signature appears at 179-192 (PPSALSALDVELPP).

It belongs to the securin family. As to quaternary structure, interacts with the caspase-like ESPL1, and prevents its protease activity by covering its active site. Interacts with p53/TP53 and blocks its activity probably by blocking its binding to DNA. Interacts with the Ku 70 kDa subunit of ds-DNA kinase. Interacts with PTTG1IP. Interacts with RPS10 and DNAJA1. Phosphorylated at Ser-162 by CDK1 during mitosis. In terms of processing, phosphorylated in vitro by ds-DNA kinase. Post-translationally, ubiquitinated through 'Lys-11' linkage of ubiquitin moieties by the anaphase promoting complex (APC) at the onset of anaphase, conducting to its degradation. 'Lys-11'-linked ubiquitination is mediated by the E2 ligase UBE2C/UBCH10. Expressed at low level in most tissues, except in adult testis, where it is highly expressed. Expressed in both spermatocytes and spermatids.

It is found in the cytoplasm. Its subcellular location is the nucleus. Functionally, regulatory protein, which plays a central role in chromosome stability, in the p53/TP53 pathway, and DNA repair. Probably acts by blocking the action of key proteins. During the mitosis, it blocks Separase/ESPL1 function, preventing the proteolysis of the cohesin complex and the subsequent segregation of the chromosomes. At the onset of anaphase, it is ubiquitinated, conducting to its destruction and to the liberation of ESPL1. Its function is however not limited to a blocking activity, since it is required to activate ESPL1. Negatively regulates the transcriptional activity and related apoptosis activity of p53/TP53. The negative regulation of p53/TP53 may explain the strong transforming capability of the protein when it is overexpressed. May also play a role in DNA repair via its interaction with Ku, possibly by connecting DNA damage-response pathways with sister chromatid separation. The chain is Securin (Pttg1) from Rattus norvegicus (Rat).